The primary structure comprises 400 residues: uncharacterized protein (400 aa).

The signal sequence occupies residues 1–31 (MENPIKPVATRSIGIAVVLLVVGIVIGFAVG).

Belongs to the bacterial solute-binding protein 1 family. WtpA subfamily.

This is an uncharacterized protein from Thermoplasma acidophilum (strain ATCC 25905 / DSM 1728 / JCM 9062 / NBRC 15155 / AMRC-C165).